A 254-amino-acid chain; its full sequence is Adenosine 5'-phosphosulfate reductase (254 aa).

[4Fe-4S] cluster-binding residues include Cys-131, Cys-132, Cys-212, and Cys-215. Cys-238 acts as the Nucleophile; cysteine thiosulfonate intermediate in catalysis.

The protein belongs to the PAPS reductase family. CysH subfamily. The cofactor is [4Fe-4S] cluster.

Its subcellular location is the cytoplasm. It carries out the reaction [thioredoxin]-disulfide + sulfite + AMP + 2 H(+) = adenosine 5'-phosphosulfate + [thioredoxin]-dithiol. It participates in sulfur metabolism; hydrogen sulfide biosynthesis; sulfite from sulfate. Functionally, catalyzes the formation of sulfite from adenosine 5'-phosphosulfate (APS) using thioredoxin as an electron donor. The chain is Adenosine 5'-phosphosulfate reductase from Mesorhizobium japonicum (strain LMG 29417 / CECT 9101 / MAFF 303099) (Mesorhizobium loti (strain MAFF 303099)).